The following is a 151-amino-acid chain: Putative pre-16S rRNA nuclease (151 aa).

The protein belongs to the YqgF nuclease family.

It localises to the cytoplasm. Its function is as follows. Could be a nuclease involved in processing of the 5'-end of pre-16S rRNA. The protein is Putative pre-16S rRNA nuclease of Methylococcus capsulatus (strain ATCC 33009 / NCIMB 11132 / Bath).